The primary structure comprises 301 residues: Phosducin-like protein (301 aa).

T2 carries the N-acetylthreonine modification. Residues 15-60 (YYYSTSEDEDSDHEDKDRGRGAPASSSTPAEAELAGEGISVNTGPK) form a disordered region. Phosphoserine is present on residues S20 and S25. The segment covering 36-49 (APASSSTPAEAELA) has biased composition (low complexity). Positions 36–299 (APASSSTPAE…TCHSEDSDLE (264 aa)) constitute a Phosducin domain. The segment at 158–301 (FKQVLEIPSG…HSEDSDLEID (144 aa)) is thioredoxin fold. Phosphoserine occurs at positions 226, 293, and 296.

Belongs to the phosducin family. In terms of assembly, interacts with the CCT chaperonin complex. Forms a complex with the beta and gamma subunits of the GTP-binding protein, transducin.

Its subcellular location is the cell projection. The protein resides in the cilium. Functions as a co-chaperone for CCT in the assembly of heterotrimeric G protein complexes, facilitates the assembly of both Gbeta-Ggamma and RGS-Gbeta5 heterodimers. Also acts as a positive regulator of hedgehog signaling and regulates ciliary function. In Rattus norvegicus (Rat), this protein is Phosducin-like protein (Pdcl).